The following is a 345-amino-acid chain: Phosphoribosylformylglycinamidine cyclo-ligase (345 aa).

The protein belongs to the AIR synthase family.

The protein localises to the cytoplasm. It carries out the reaction 2-formamido-N(1)-(5-O-phospho-beta-D-ribosyl)acetamidine + ATP = 5-amino-1-(5-phospho-beta-D-ribosyl)imidazole + ADP + phosphate + H(+). Its pathway is purine metabolism; IMP biosynthesis via de novo pathway; 5-amino-1-(5-phospho-D-ribosyl)imidazole from N(2)-formyl-N(1)-(5-phospho-D-ribosyl)glycinamide: step 2/2. The chain is Phosphoribosylformylglycinamidine cyclo-ligase from Escherichia coli (strain SE11).